The sequence spans 266 residues: MVQRLSLMATIADDDFPLFKTSINILTGSPAVVYANLMVVWKPNPNYEVDNLNSKNELVEPTRMTTATSIPLELILNDPVSKNNGVDSDEILNTMKEQEFPIKQEQLFDMINNPSNNTINWTLTTADIPAAGSNRKVSMQAIQEATIVHQAGNNPTLANVMAELGYSFDYMYVTVGVRFVHKRDVIIHCHKVWDIAEDNIIQVTKGGYVVHTFVTVNRATDIERLNLAEANLLSLQRDLSGYLDFKVPDRKSMDSRTNLTQKDITL.

Belongs to the Mediator complex subunit 18 family. Component of the Mediator complex.

Its subcellular location is the nucleus. Its function is as follows. Component of the Mediator complex, a coactivator involved in the regulated transcription of nearly all RNA polymerase II-dependent genes. Mediator functions as a bridge to convey information from gene-specific regulatory proteins to the basal RNA polymerase II transcription machinery. Mediator is recruited to promoters by direct interactions with regulatory proteins and serves as a scaffold for the assembly of a functional preinitiation complex with RNA polymerase II and the general transcription factors. The protein is Mediator of RNA polymerase II transcription subunit 18 (SRB5) of Candida glabrata (strain ATCC 2001 / BCRC 20586 / JCM 3761 / NBRC 0622 / NRRL Y-65 / CBS 138) (Yeast).